Consider the following 85-residue polypeptide: Cloacin immunity protein (85 aa).

Lysine 12 is subject to N6-methyllysine.

It belongs to the cloacin immunity protein family.

Functionally, this protein complexes with cloacin protein in equimolar amounts and inhibits it by binding with high affinity to the C-terminal catalytic domain of cloacin. The protein is Cloacin immunity protein (cim) of Escherichia coli.